The primary structure comprises 132 residues: Large-conductance mechanosensitive channel (132 aa).

The next 3 membrane-spanning stretches (helical) occupy residues 14-34 (VLDMAVGVILGAALKSIVDSL), 39-59 (INPIISLFVGQVDLSGIAVTI), and 68-88 (IGNFLNDVINFLIIAIIVFLI).

This sequence belongs to the MscL family. As to quaternary structure, homopentamer.

Its subcellular location is the cell membrane. Functionally, channel that opens in response to stretch forces in the membrane lipid bilayer. May participate in the regulation of osmotic pressure changes within the cell. This is Large-conductance mechanosensitive channel from Latilactobacillus sakei subsp. sakei (strain 23K) (Lactobacillus sakei subsp. sakei).